Reading from the N-terminus, the 182-residue chain is RNA chaperone ProQ (182 aa).

The segment at 125-160 is disordered; it reads EQRKEQRKDFFKKKAREERNAKTMNKAVKKGSPKKD.

The protein belongs to the ProQ family.

The protein localises to the cytoplasm. RNA chaperone with significant RNA binding, RNA strand exchange and RNA duplexing activities. The sequence is that of RNA chaperone ProQ from Haemophilus ducreyi (strain 35000HP / ATCC 700724).